Reading from the N-terminus, the 58-residue chain is Cholecystokinins (58 aa).

Tyr-52 carries the post-translational modification Sulfotyrosine. Phe-58 is subject to Phenylalanine amide.

Belongs to the gastrin/cholecystokinin family. As to quaternary structure, binds to CCK-A receptors in the pancreas and CCK-B receptors in the brain. cholecystokinin 8 binds CCK-A receptors more potently than cholecystokinin 58, cholecystokinin 8 and cholecystokinin 58 bind CCK-B receptors with equal affinity. In terms of processing, the precursor is cleaved by proteases to produce a number of active cholecystokinins. Cholecystokinin 58 occurs in both sulfated (CCK58(s)) and nonsulfated (CCK58(ns)) forms, which differ in their receptor-binding activities. CCK58(s) binds to the CCK-A receptor with high affinity, CCK58(ns) binds poorly to the CCK-A receptor. CCK58(s) and CCK58(ns) both bind the CCK-B receptor. Post-translationally, the precursor is cleaved by ACE, which removes the Gly-Arg-Arg peptide at the C-terminus, leading to mature hormone.

The protein resides in the secreted. This peptide hormone induces gall bladder contraction and the release of pancreatic enzymes in the gut. Its function in the brain is not clear. Binding to CCK-A receptors stimulates amylase release from the pancreas, binding to CCK-B receptors stimulates gastric acid secretion. cholecystokinin 58 and cholecystokinin 8, but not cholecystokinin 58 desnonopeptide, stimulate amylase release from the pancreas. cholecystokinin 58, but not cholecystokinin 8, increases bile-pancreatic volume. The chain is Cholecystokinins from Canis lupus familiaris (Dog).